A 198-amino-acid chain; its full sequence is Probable GTP-binding protein EngB (198 aa).

The 174-residue stretch at N22–T195 folds into the EngB-type G domain. GTP is bound by residues G30–S37, G57–L61, D75–G78, T142–D145, and F174–S176. Mg(2+) contacts are provided by S37 and T59.

Belongs to the TRAFAC class TrmE-Era-EngA-EngB-Septin-like GTPase superfamily. EngB GTPase family. It depends on Mg(2+) as a cofactor.

In terms of biological role, necessary for normal cell division and for the maintenance of normal septation. The protein is Probable GTP-binding protein EngB of Clostridium beijerinckii (strain ATCC 51743 / NCIMB 8052) (Clostridium acetobutylicum).